The chain runs to 255 residues: Chlorocatechol 1,2-dioxygenase (255 aa).

Fe cation contacts are provided by Tyr130, Tyr164, His188, and His190.

The protein belongs to the intradiol ring-cleavage dioxygenase family. It depends on Fe(3+) as a cofactor.

It catalyses the reaction 3,5-dichlorocatechol + O2 = (2E,4E)-2,4-dichloromuconate + 2 H(+). Its pathway is aromatic compound metabolism; 3-chlorocatechol degradation. In terms of biological role, preferentially converts 3,5-dichlorocatechol as opposed to other chlorinated catechols. Retains diminished activity toward non-chlorinated substrates. The chain is Chlorocatechol 1,2-dioxygenase (tfdC) from Burkholderia cepacia (Pseudomonas cepacia).